The primary structure comprises 432 residues: Adenosylhomocysteinase (432 aa).

The residue at position 2 (serine 2) is an N-acetylserine. Residues threonine 57, aspartate 131, and glutamate 156 each coordinate substrate. A Phosphoserine modification is found at serine 183. Positions 183–350 are NAD binding; that stretch reads SVTKSKFDNL…EGRLVNLGCA (168 aa). Residues lysine 186 and aspartate 190 each coordinate substrate. N6-(2-hydroxyisobutyryl)lysine is present on lysine 186. Phosphotyrosine is present on tyrosine 193.

The protein belongs to the adenosylhomocysteinase family. In terms of assembly, homotetramer. Interaction with AHCYL1. The cofactor is NAD(+).

The protein resides in the cytoplasm. The protein localises to the melanosome. It localises to the nucleus. It is found in the endoplasmic reticulum. It carries out the reaction S-adenosyl-L-homocysteine + H2O = L-homocysteine + adenosine. Its pathway is amino-acid biosynthesis; L-homocysteine biosynthesis; L-homocysteine from S-adenosyl-L-homocysteine: step 1/1. Catalyzes the hydrolysis of S-adenosyl-L-homocysteine to form adenosine and homocysteine. Binds copper ions. This Sus scrofa (Pig) protein is Adenosylhomocysteinase (AHCY).